The sequence spans 644 residues: 3-isopropylmalate dehydratase (644 aa).

Residues Cys400, Cys460, and Cys463 each contribute to the [4Fe-4S] cluster site. The disordered stretch occupies residues 521-568 (SEIPGTPKQSPRQEVVAEFESEEDDVDSSSVDSAPVATPPSTGDSAGM). Residues 537 to 547 (AEFESEEDDVD) show a composition bias toward acidic residues.

This sequence belongs to the aconitase/IPM isomerase family. In terms of assembly, monomer. It depends on [4Fe-4S] cluster as a cofactor.

The enzyme catalyses (2R,3S)-3-isopropylmalate = (2S)-2-isopropylmalate. Its pathway is amino-acid biosynthesis; L-leucine biosynthesis; L-leucine from 3-methyl-2-oxobutanoate: step 2/4. Catalyzes the isomerization between 2-isopropylmalate and 3-isopropylmalate, via the formation of 2-isopropylmaleate. The sequence is that of 3-isopropylmalate dehydratase (LEUA) from Mucor circinelloides f. lusitanicus (Mucor racemosus var. lusitanicus).